The following is a 1138-amino-acid chain: MEVVDETEALQRFFEGHDISGALEPSNIDTSILEEYIGKEDASDLCFPEISAPASTASFPHGPPAIPGSSGLHHLSPPGSGPSPGRHGPLPPPTYGTPLNCNNNNGMGTAPKPFLGGSGPPIKAEPKAPYAPGTLPDSPPDSGSEAYSPQQVNDPHLLRTITPETLCHVGVSSRLEHPPPPPAHLPGPPPPPPPPPHYPVLQRDLYMKAEPPVPPYAAMGPGLVPPELHHTQQTQVLHQLLQQHGAELPPHPSKKRKHSESPPNTLNAQMLNGMIKQEPGTVTALPPHPARAPSPPWPPQGPLSPGTGSLPLSIARAQTPPWHPPGAPSPGLLQDSDSLSGSYLDPNYQSIKWQPHQQNKWATLYDANYKELPMLTYRVDADKGFNFSVGDDAFVCQKKNHFQVTVYIGMLGEPKYVKTPEGLKPLDCFYLKLHGVKLEALNQSINIEQSQSDRSKRPFNPVTVNLPPEQVTKVTVGRLHFSETTANNMRKKGKPNPDQRYFMLVVALQAHAQNQNYTLAAQISERIIVRASNPGQFESDSDVLWQRAQLPDTVFHHGRVGINTDRPDEALVVHGNVKVMGSLMHPSDLRAKEHVQEVDTTEQLKRISRMRLVHYRYKPEFAASAGIEATAPETGVIAQEVKEILPEAVKDTGDVVFANGKTIENFLVVNKERIFMENVGAVKELCKLTDNLETRIDELERWSHKLAKLRRLDSLKSTGSSGAFSHAGSQFSRAGSVPHKKRPPKLANKSSPAVPDQACISQRFLQGTIIALVVVMAFSVVSMSTLYVLSLRSEEDLVDADGSLAVSTSCLLALLRPQDPGGSEAMCPWSSQSFGTTQLRQSSMTTGLPGTQPSLLLVTKSASGPALRALDLCSSQPCPIVCCSPPVSSPATDPALGPTLTPTPSPSSNPKHSGPGQMAPLPVTNIRAKSWGISANGISYSKHSKSLEPLASPVVPFPGGQSKTKNSPSFNLQSRARRGAPQPSPSPAQFTQTQGQLDPAPSLTSIQLLENSMPITSQYCVPEGACRLGNFTYHIPVSSSTPLHLSLTLQMNSSTPVSVVLCSLTSEEEPCEEGGFLQRFHPHQDTQGTSHQWPVTILSFREFTYHFRVTLLGQANCSSEAIVQPATDYYFHFYRLCD.

Over 1-768 (MEVVDETEAL…CISQRFLQGT (768 aa)) the chain is Cytoplasmic. Disordered stretches follow at residues 56–150 (TASF…YSPQ), 171–200 (VSSRLEHPPPPPAHLPGPPPPPPPPPHYPV), 246–267 (AELPPHPSKKRKHSESPPNTLN), and 279–339 (PGTV…SDSL). Over residues 67-88 (PGSSGLHHLSPPGSGPSPGRHG) the composition is skewed to low complexity. N6-acetyllysine is present on Lys123. Pro residues predominate over residues 178–198 (PPPPPAHLPGPPPPPPPPPHY). The NDT80 DNA-binding region spans 250–541 (PHPSKKRKHS…SNPGQFESDS (292 aa)). A Nuclear localization signal motif is present at residues 254–257 (KKRK). A compositionally biased stretch (pro residues) spans 286–302 (PPHPARAPSPPWPPQGP). The segment covering 329 to 339 (SPGLLQDSDSL) has biased composition (low complexity). The short motif at 491–494 (KKGK) is the Nuclear localization signal element. In terms of domain architecture, Peptidase S74 spans 587–696 (SDLRAKEHVQ…KLTDNLETRI (110 aa)). Residues 680–711 (GAVKELCKLTDNLETRIDELERWSHKLAKLRR) are a coiled coil. Polar residues predominate over residues 721–733 (SGAFSHAGSQFSR). Residues 721-753 (SGAFSHAGSQFSRAGSVPHKKRPPKLANKSSPA) are disordered. The segment at 765 to 1003 (LQGTIIALVV…QGQLDPAPSL (239 aa)) is required for interaction with TMEM98. Residues 769 to 789 (IIALVVVMAFSVVSMSTLYVL) form a helical membrane-spanning segment. Residues 790–1138 (SLRSEEDLVD…YYFHFYRLCD (349 aa)) lie on the Lumenal side of the membrane. Over residues 891–900 (ATDPALGPTL) the composition is skewed to low complexity. 2 disordered regions span residues 891 to 922 (ATDPALGPTLTPTPSPSSNPKHSGPGQMAPLP) and 951 to 999 (ASPV…QLDP). Composition is skewed to polar residues over residues 961–974 (QSKTKNSPSFNLQS) and 987–999 (PAQFTQTQGQLDP). 3 N-linked (GlcNAc...) asparagine glycosylation sites follow: Asn1030, Asn1052, and Asn1116.

This sequence belongs to the MRF family. Homotrimer. Interacts (via C-terminal region) with TMEM98; the interaction inhibits MYRF self-cleavage. Post-translationally, glycosylated. In terms of processing, follows autocatalytic cleavage via the peptidase S74 domain. Autoprocessing is apparently constitutive and is essential for transcriptional activity. Autocatalytic cleavage is inhibited by interaction with TMEM98. In terms of tissue distribution, specifically expressed by postmitotic oligodendrocytes in the CNS. Not detected in the peripheral nervous system (PNS).

It is found in the endoplasmic reticulum membrane. It localises to the nucleus. Its subcellular location is the cytoplasm. Functionally, constitutes a precursor of the transcription factor. Mediates the autocatalytic cleavage that releases the Myelin regulatory factor, N-terminal component that specifically activates transcription of central nervous system (CNS) myelin genes. Its function is as follows. Membrane-bound part that has no transcription factor activity and remains attached to the endoplasmic reticulum membrane following cleavage. Transcription factor that specifically activates expression of myelin genes such as MBP, MOG, MAG, DUSP15 and PLP1 during oligodendrocyte (OL) maturation, thereby playing a central role in oligodendrocyte maturation and CNS myelination. Specifically recognizes and binds DNA sequence 5'-CTGGYAC-3' in the regulatory regions of myelin-specific genes and directly activates their expression. Not only required during oligodendrocyte differentiation but is also required on an ongoing basis for the maintenance of expression of myelin genes and for the maintenance of a mature, viable oligodendrocyte phenotype. The sequence is that of Myelin regulatory factor (Myrf) from Mus musculus (Mouse).